Reading from the N-terminus, the 272-residue chain is Bis(5'-nucleosyl)-tetraphosphatase, symmetrical (272 aa).

It belongs to the Ap4A hydrolase family.

It catalyses the reaction P(1),P(4)-bis(5'-adenosyl) tetraphosphate + H2O = 2 ADP + 2 H(+). Its function is as follows. Hydrolyzes diadenosine 5',5'''-P1,P4-tetraphosphate to yield ADP. This Wigglesworthia glossinidia brevipalpis protein is Bis(5'-nucleosyl)-tetraphosphatase, symmetrical.